The following is a 150-amino-acid chain: Globin-1 (150 aa).

One can recognise a Globin domain in the interval 11 to 150 (PLSDAEKNKI…MICILLSSAY (140 aa)). Heme b is bound by residues His-74 and His-106.

It belongs to the globin family. As to quaternary structure, monomer.

This Mordacia mordax (Southern hemisphere lamprey) protein is Globin-1.